A 130-amino-acid polypeptide reads, in one-letter code: Small ribosomal subunit protein uS11c (130 aa).

Belongs to the universal ribosomal protein uS11 family. Part of the 30S ribosomal subunit.

The protein resides in the plastid. It is found in the chloroplast. This Chlorokybus atmophyticus (Soil alga) protein is Small ribosomal subunit protein uS11c.